Reading from the N-terminus, the 169-residue chain is Ribosome maturation factor RimM (169 aa).

Residues 94 to 167 (ENEFYFHEII…KITIEVMEGL (74 aa)) form the PRC barrel domain.

It belongs to the RimM family. As to quaternary structure, binds ribosomal protein uS19.

It is found in the cytoplasm. Functionally, an accessory protein needed during the final step in the assembly of 30S ribosomal subunit, possibly for assembly of the head region. Essential for efficient processing of 16S rRNA. May be needed both before and after RbfA during the maturation of 16S rRNA. It has affinity for free ribosomal 30S subunits but not for 70S ribosomes. The sequence is that of Ribosome maturation factor RimM from Listeria welshimeri serovar 6b (strain ATCC 35897 / DSM 20650 / CCUG 15529 / CIP 8149 / NCTC 11857 / SLCC 5334 / V8).